Consider the following 361-residue polypeptide: Ferredoxin--NADP reductase 1 (361 aa).

7 residues coordinate FAD: Asp-44, Gln-52, Tyr-57, Ala-97, Phe-142, Asp-308, and Ser-349.

It belongs to the ferredoxin--NADP reductase type 2 family. Homodimer. It depends on FAD as a cofactor.

The enzyme catalyses 2 reduced [2Fe-2S]-[ferredoxin] + NADP(+) + H(+) = 2 oxidized [2Fe-2S]-[ferredoxin] + NADPH. The chain is Ferredoxin--NADP reductase 1 from Cupriavidus necator (strain ATCC 17699 / DSM 428 / KCTC 22496 / NCIMB 10442 / H16 / Stanier 337) (Ralstonia eutropha).